We begin with the raw amino-acid sequence, 402 residues long: 1-deoxy-D-xylulose 5-phosphate reductoisomerase (402 aa).

NADPH contacts are provided by threonine 10, glycine 11, serine 12, isoleucine 13, asparagine 38, and asparagine 124. Lysine 125 lines the 1-deoxy-D-xylulose 5-phosphate pocket. Glutamate 126 contributes to the NADPH binding site. Aspartate 150 contributes to the Mn(2+) binding site. 1-deoxy-D-xylulose 5-phosphate-binding residues include serine 151, glutamate 152, serine 186, and histidine 209. Glutamate 152 serves as a coordination point for Mn(2+). Residue glycine 215 participates in NADPH binding. Positions 222, 227, 228, and 231 each coordinate 1-deoxy-D-xylulose 5-phosphate. Glutamate 231 serves as a coordination point for Mn(2+).

The protein belongs to the DXR family. The cofactor is Mg(2+). Mn(2+) is required as a cofactor.

The catalysed reaction is 2-C-methyl-D-erythritol 4-phosphate + NADP(+) = 1-deoxy-D-xylulose 5-phosphate + NADPH + H(+). The protein operates within isoprenoid biosynthesis; isopentenyl diphosphate biosynthesis via DXP pathway; isopentenyl diphosphate from 1-deoxy-D-xylulose 5-phosphate: step 1/6. In terms of biological role, catalyzes the NADPH-dependent rearrangement and reduction of 1-deoxy-D-xylulose-5-phosphate (DXP) to 2-C-methyl-D-erythritol 4-phosphate (MEP). The chain is 1-deoxy-D-xylulose 5-phosphate reductoisomerase from Vibrio vulnificus (strain YJ016).